Reading from the N-terminus, the 102-residue chain is Small ribosomal subunit protein uS10 (102 aa).

The protein belongs to the universal ribosomal protein uS10 family. As to quaternary structure, part of the 30S ribosomal subunit.

Its function is as follows. Involved in the binding of tRNA to the ribosomes. The chain is Small ribosomal subunit protein uS10 from Methanosarcina mazei (strain ATCC BAA-159 / DSM 3647 / Goe1 / Go1 / JCM 11833 / OCM 88) (Methanosarcina frisia).